The chain runs to 467 residues: Glutamyl-tRNA(Gln) amidotransferase subunit A (467 aa).

Active-site charge relay system residues include lysine 57 and serine 132. The Acyl-ester intermediate role is filled by serine 156.

This sequence belongs to the amidase family. GatA subfamily. As to quaternary structure, heterotrimer of A, B and C subunits.

The catalysed reaction is L-glutamyl-tRNA(Gln) + L-glutamine + ATP + H2O = L-glutaminyl-tRNA(Gln) + L-glutamate + ADP + phosphate + H(+). Its function is as follows. Allows the formation of correctly charged Gln-tRNA(Gln) through the transamidation of misacylated Glu-tRNA(Gln) in organisms which lack glutaminyl-tRNA synthetase. The reaction takes place in the presence of glutamine and ATP through an activated gamma-phospho-Glu-tRNA(Gln). This chain is Glutamyl-tRNA(Gln) amidotransferase subunit A, found in Pseudothermotoga lettingae (strain ATCC BAA-301 / DSM 14385 / NBRC 107922 / TMO) (Thermotoga lettingae).